We begin with the raw amino-acid sequence, 159 residues long: Mesogenin-1 (159 aa).

Positions Pro79–Ser101 are disordered. Over residues Lys86–Ala100 the composition is skewed to basic residues. The region spanning Gln95 to Leu149 is the bHLH domain.

It is found in the nucleus. Its function is as follows. Involved in specifying the paraxial, but not dorsal, mesoderm. May regulate the expression of T-box transcription factors required for mesoderm formation and differentiation. This Gallus gallus (Chicken) protein is Mesogenin-1 (MSGN1).